We begin with the raw amino-acid sequence, 477 residues long: Mitochondrial adenyl nucleotide antiporter SLC25A24 (477 aa).

The segment at 1-173 (MLRWLRDFVL…RFWKHSTGID (173 aa)) is regulatory N-terminal domain. At 1-197 (MLRWLRDFVL…EKKSGQWWRQ (197 aa)) the chain is on the mitochondrial intermembrane side. EF-hand domains follow at residues 19 to 54 (EQPT…LGIP), 55 to 88 (LGQD…KDHE), 86 to 121 (DHEK…LGLT), and 122 to 157 (ISEQ…NPVT). The Ca(2+) site is built by aspartate 32, asparagine 34, aspartate 36, valine 38, glutamate 43, aspartate 68, asparagine 70, aspartate 72, lysine 74, glutamate 79, aspartate 99, asparagine 101, aspartate 103, lysine 105, glutamate 110, aspartate 135, aspartate 137, threonine 139, threonine 141, and glutamate 146. A linker region region spans residues 159-168 (IEEIIRFWKH). Positions 174 to 477 (IGDSLTIPDE…MKQTLGVTQK (304 aa)) are C-terminal transmembrane transporter domain. Solcar repeat units follow at residues 192-278 (GQWW…YKKL), 286-371 (IGTF…LKSY), and 383-471 (PGVM…MKQT). A helical membrane pass occupies residues 198 to 215 (LLAGGIAGAVSRTSTAPL). Over 216 to 252 (DRLKIMMQVHGSKSDKMNIFGGFRQMVKEGGIRSLWR) the chain is Mitochondrial matrix. A helical membrane pass occupies residues 253–272 (GNGTNVIKIAPETAVKFWAY). Residues 273-295 (EQYKKLLTEEGQKIGTFERFISG) are Mitochondrial intermembrane-facing. A helical membrane pass occupies residues 296–309 (SMAGATAQTFIYPM). At 310 to 345 (EVMKTRLAVGKTGQYSGIYDCAKKILKHEGLGAFYK) the chain is on the mitochondrial matrix side. Lysine 320 is subject to N6-acetyllysine; alternate. At lysine 320 the chain carries N6-succinyllysine; alternate. Lysine 336 carries the N6-acetyllysine modification. Residues 346–365 (GYVPNLLGIIPYAGIDLAVY) form a helical membrane-spanning segment. Residues 366–388 (ELLKSYWLDNFAKDSVNPGVMVL) are Mitochondrial intermembrane-facing. A helical membrane pass occupies residues 389-406 (LGCGALSSTCGQLASYPL). Topologically, residues 407-445 (ALVRTRMQAQAMLEGSPQLNMVGLFRRIISKEGIPGLYR) are mitochondrial matrix. Position 437 is an N6-acetyllysine; alternate (lysine 437). Lysine 437 bears the N6-succinyllysine; alternate mark. Residues 446–465 (GITPNFMKVLPAVGISYVVY) traverse the membrane as a helical segment. Over 466 to 477 (ENMKQTLGVTQK) the chain is Mitochondrial intermembrane.

The protein belongs to the mitochondrial carrier (TC 2.A.29) family. In terms of assembly, monomer. Expressed in all tissues tested. Highly expressed in testis, expressed at intermediate level in small intestine and pancreas, and weakly expressed in kidney, spleen, liver, skeletal muscle and heart.

It is found in the mitochondrion inner membrane. The catalysed reaction is Mg(2+)(out) + phosphate(in) + ATP(out) = Mg(2+)(in) + phosphate(out) + ATP(in). The enzyme catalyses ADP(out) + phosphate(in) + H(+)(out) = ADP(in) + phosphate(out) + H(+)(in). It catalyses the reaction AMP(out) + phosphate(in) = AMP(in) + phosphate(out). It carries out the reaction phosphate(in) + ATP(out) + 2 H(+)(out) = phosphate(out) + ATP(in) + 2 H(+)(in). The catalysed reaction is dADP(in) + ADP(out) = dADP(out) + ADP(in). The enzyme catalyses Mg(2+)(in) + ADP(out) + ATP(in) + H(+)(out) = Mg(2+)(out) + ADP(in) + ATP(out) + H(+)(in). It catalyses the reaction ADP(out) + diphosphate(in) = ADP(in) + diphosphate(out). It carries out the reaction dAMP(in) + ADP(out) + H(+)(out) = dAMP(out) + ADP(in) + H(+)(in). The catalysed reaction is 3'-AMP(in) + ADP(out) + H(+)(out) = 3'-AMP(out) + ADP(in) + H(+)(in). The enzyme catalyses dAMP(out) + phosphate(in) = dAMP(in) + phosphate(out). It catalyses the reaction 3'-AMP(out) + phosphate(in) = 3'-AMP(in) + phosphate(out). It carries out the reaction dADP(out) + phosphate(in) + H(+)(out) = dADP(in) + phosphate(out) + H(+)(in). With respect to regulation, activated by an increase in cytosolic calcium levels that induce a conformational change of the N-terminal regulatory domain, uncapping the channel and allowing transport. Inhibited by bathophenanthroline, mersalyl, p-hydroxymercuribenzoate, bromcresol purple and tannic acid. Functionally, electroneutral antiporter that mediates the transport of adenyl nucleotides through the inner mitochondrial membrane. Originally identified as an ATP-magnesium/inorganic phosphate antiporter, it also acts as a broad specificity adenyl nucleotide antiporter. By regulating the mitochondrial matrix adenyl nucleotide pool could adapt to changing cellular energetic demands and indirectly regulate adenyl nucleotide-dependent metabolic pathways. In vitro, a low activity is also observed with guanyl and pyrimidine nucleotides. May play a role in protecting cells against oxidative stress-induced cell death, by buffering calcium levels in the mitochondrial matrix through the formation of calcium-phosphate precipitates. The polypeptide is Mitochondrial adenyl nucleotide antiporter SLC25A24 (Homo sapiens (Human)).